The following is an 818-amino-acid chain: uncharacterized protein (818 aa).

Composition is skewed to low complexity over residues 1 to 33, 44 to 68, and 97 to 150; these read MYNN…NYIS, NNFL…PQQQ, and NNSN…TKSN. 5 disordered regions span residues 1 to 68, 92 to 150, 164 to 220, 284 to 306, and 415 to 445; these read MYNN…PQQQ, LNTG…TKSN, KLDN…KYHE, NMNG…NNSD, and NINK…NNNN. Composition is skewed to acidic residues over residues 172–190 and 205–214; these read SEEE…EEKE and DNNSQDEDKE. A compositionally biased stretch (low complexity) spans 284-302; that stretch reads NMNGSSDSSDSSNSSGHSR. A helical membrane pass occupies residues 534–554; the sequence is IIAIIVIVWPLIANLTYKFIV. The interval 779–808 is disordered; that stretch reads ANNFMSDSNRSPSSSSSSSSSTSDSENGML. Positions 784–803 are enriched in low complexity; it reads SDSNRSPSSSSSSSSSTSDS.

It is found in the membrane. This is an uncharacterized protein from Dictyostelium discoideum (Social amoeba).